The following is a 595-amino-acid chain: Aspartate--tRNA(Asp/Asn) ligase (595 aa).

Residue Glu171 participates in L-aspartate binding. The segment at 195–198 (QLFK) is aspartate. Arg217 is a binding site for L-aspartate. ATP-binding positions include 217–219 (RDE) and Gln226. His454 is an L-aspartate binding site. Glu488 contributes to the ATP binding site. Arg495 is a binding site for L-aspartate. ATP is bound at residue 540–543 (GLDR).

The protein belongs to the class-II aminoacyl-tRNA synthetase family. Type 1 subfamily. In terms of assembly, homodimer.

The protein localises to the cytoplasm. The catalysed reaction is tRNA(Asx) + L-aspartate + ATP = L-aspartyl-tRNA(Asx) + AMP + diphosphate. In terms of biological role, aspartyl-tRNA synthetase with relaxed tRNA specificity since it is able to aspartylate not only its cognate tRNA(Asp) but also tRNA(Asn). Reaction proceeds in two steps: L-aspartate is first activated by ATP to form Asp-AMP and then transferred to the acceptor end of tRNA(Asp/Asn). The chain is Aspartate--tRNA(Asp/Asn) ligase from Bordetella petrii (strain ATCC BAA-461 / DSM 12804 / CCUG 43448).